A 434-amino-acid polypeptide reads, in one-letter code: MGYQKPKGTADILPGESDQWQLVEKTARDVFARYQFKEIRTPLFESYDVFSRSSGDTSDIVSKEMYDFMDKGDRHIALRPEGTAGVVRAFVENKLYGPEHQKPYKVYYMGPMFRYERPQSGRQRQFHQIGVESFGSESPAVDVEVISMAMRLLREFKITDLKLAINTLGDAASRAAYHEALVNYLEPHFEELSDDSKVRLHKNPLRVLDSKDAKDQEIVKDAPVILDYLTDEAKVHFNTVKTLLESLNIPYEVDTEMVRGLDYYNHTIFEIMTSNKVLGRGYTTVLAGGRYNGLVEQLGGPDMPGVGFGLGVERLLLLMNAQNSDLVAAPVLDAYVVGIGAETSATTLHLVESLREAGLTADRDYLDRKPKAQFKTANKLNAQFVVTIGESELADKTAHVKDMTSGVEITVPLTTLEADFAAVKNELKAQEENE.

The protein belongs to the class-II aminoacyl-tRNA synthetase family. As to quaternary structure, homodimer.

It localises to the cytoplasm. It carries out the reaction tRNA(His) + L-histidine + ATP = L-histidyl-tRNA(His) + AMP + diphosphate + H(+). The protein is Histidine--tRNA ligase of Latilactobacillus sakei subsp. sakei (strain 23K) (Lactobacillus sakei subsp. sakei).